Consider the following 465-residue polypeptide: tRNA modification GTPase MnmE (465 aa).

Residues arginine 27, glutamate 91, and arginine 130 each contribute to the (6S)-5-formyl-5,6,7,8-tetrahydrofolate site. The TrmE-type G domain maps to 227-386 (GLSTAIIGRP…LEAKIADLFF (160 aa)). Asparagine 237 serves as a coordination point for K(+). Residues 237–242 (NVGKSS), 256–262 (TDIAGTT), and 281–284 (DTAG) contribute to the GTP site. Serine 241 provides a ligand contact to Mg(2+). K(+) is bound by residues threonine 256, isoleucine 258, and threonine 261. Threonine 262 serves as a coordination point for Mg(2+). Residue lysine 465 participates in (6S)-5-formyl-5,6,7,8-tetrahydrofolate binding.

It belongs to the TRAFAC class TrmE-Era-EngA-EngB-Septin-like GTPase superfamily. TrmE GTPase family. Homodimer. Heterotetramer of two MnmE and two MnmG subunits. The cofactor is K(+).

It localises to the cytoplasm. Exhibits a very high intrinsic GTPase hydrolysis rate. Involved in the addition of a carboxymethylaminomethyl (cmnm) group at the wobble position (U34) of certain tRNAs, forming tRNA-cmnm(5)s(2)U34. The protein is tRNA modification GTPase MnmE of Enterococcus faecalis (strain ATCC 700802 / V583).